We begin with the raw amino-acid sequence, 141 residues long: Hemoglobin subunit alpha-A (141 aa).

The Globin domain occupies 1 to 141 (VLSAADKTNV…VSTVLTAKYR (141 aa)). His-58 is a binding site for O2. His-87 is a heme b binding site.

The protein belongs to the globin family. In terms of assembly, heterotetramer of two alpha chains and two beta chains. In terms of tissue distribution, red blood cells.

Its function is as follows. Involved in oxygen transport from the lung to the various peripheral tissues. The protein is Hemoglobin subunit alpha-A (HBAA) of Eudynamys scolopaceus (Western koel).